Here is a 337-residue protein sequence, read N- to C-terminus: Protein MICROTUBULE BINDING PROTEIN 2C (337 aa).

The segment at Arg-80–Arg-147 is disordered. Over residues Pro-89 to Gly-103 the composition is skewed to basic and acidic residues. A compositionally biased stretch (polar residues) spans Lys-120–Leu-142. Coiled-coil stretches lie at residues Thr-143–Asp-194, Val-223–Glu-250, and Leu-294–Asn-314.

The protein belongs to the microtubule binding protein 2C family. In terms of assembly, interacts with KN-1. Binds to tobacco mosaic virus movement protein (TMV-MP) at microtubules. As to expression, constitutively expressed in leaves.

The protein resides in the cytoplasm. The protein localises to the cytoskeleton. Prevents homeodomain proteins (e.g. STM) association to plasmodesmata and, consequently, cell-to-cell transport. Binds to RNA. Alters KN1 RNA-binding capacity. Regulates cytoskeleton (e.g. actin) organization that determinates cell shape. Interferes with cell-to-cell transport of tobacco mosaic virus movement protein (TMV-MP) by mediating its accumulation at microtubules, thus interfering with cell-to-cell virus movement. This is Protein MICROTUBULE BINDING PROTEIN 2C from Nicotiana tabacum (Common tobacco).